The sequence spans 404 residues: Glycerol-1-phosphate dehydrogenase [NAD(P)+] (404 aa).

Residues aspartate 56, glycine 118–aspartate 122, and threonine 140–serine 143 contribute to the NAD(+) site. Aspartate 145 serves as a coordination point for substrate. Residue serine 149 coordinates NAD(+). Aspartate 192 contacts substrate. Residues aspartate 192 and histidine 272 each contribute to the Ni(2+) site. Histidine 276 lines the substrate pocket. Histidine 292 serves as a coordination point for Ni(2+).

This sequence belongs to the glycerol-1-phosphate dehydrogenase family. Homodimer. The cofactor is Ni(2+).

It localises to the cytoplasm. It catalyses the reaction sn-glycerol 1-phosphate + NAD(+) = dihydroxyacetone phosphate + NADH + H(+). It carries out the reaction sn-glycerol 1-phosphate + NADP(+) = dihydroxyacetone phosphate + NADPH + H(+). In terms of biological role, catalyzes the NAD(P)H-dependent reduction of dihydroxyacetonephosphate (DHAP or glycerone phosphate) to glycerol 1-phosphate (G1P). The G1P thus generated is probably used for the synthesis of phosphoglycerolipids in Gram-positive bacterial species. This is Glycerol-1-phosphate dehydrogenase [NAD(P)+] from Geobacillus stearothermophilus (Bacillus stearothermophilus).